Reading from the N-terminus, the 202-residue chain is MNFLRKIVRNCKDEDDQKPPLVSAPPDDDDLWLPPPEYVPLTEITGKRNMRNFCINGEVKVCSPNGYSFRILRHILKSFDEIYSGNHRMIGLVKVVIGLALSGAPVPEGMNWVYKLRRTLIFQWAESRGPLDGEELEYSQEITWDDDSEFIGLQIRVSARQCHIQGRIWCINMNSRACQLWSDMSLKTQQSEEDKNSSLLLE.

The PPXY motif motif lies at 45-48 (TGKR). The segment at 125-161 (AESRGPLDGEELEYSQEITWDDDSEFIGLQIRVSARQ) is essential for glycoprotein binding.

This sequence belongs to the lyssavirus matrix protein family. Homomultimer. Interacts with nucleoprotein and with the cytoplasmic domain of glycoprotein.

The protein resides in the virion membrane. The protein localises to the host endomembrane system. Plays a major role in assembly and budding of virion. Completely covers the ribonucleoprotein coil and keep it in condensed bullet-shaped form. Inhibits viral transcription and stimulates replication. Plays a major role in early induction of TRAIL-mediated apoptosis in infected neurons. This Australian bat lyssavirus (isolate Human/AUS/1998) (ABLV) protein is Matrix protein (M).